The sequence spans 214 residues: RNA-free ribonuclease P (214 aa).

This sequence belongs to the HARP family.

It catalyses the reaction Endonucleolytic cleavage of RNA, removing 5'-extranucleotides from tRNA precursor.. Its function is as follows. RNA-free RNase P that catalyzes the removal of the 5'-leader sequence from pre-tRNA to produce the mature 5'-terminus. This chain is RNA-free ribonuclease P, found in Aeropyrum pernix (strain ATCC 700893 / DSM 11879 / JCM 9820 / NBRC 100138 / K1).